The primary structure comprises 918 residues: GPI ethanolamine phosphate transferase 3 (918 aa).

The helical transmembrane segment at 16-36 (IGTWKYIQACIFFAIILISNF) threads the bilayer. Asparagine 54, asparagine 71, asparagine 101, asparagine 197, and asparagine 399 each carry an N-linked (GlcNAc...) asparagine glycan. 15 helical membrane-spanning segments follow: residues 429 to 449 (LFPM…LALL), 459 to 479 (MSAN…ILIL), 486 to 506 (SPFP…LNSF), 523 to 543 (FSIF…FTVW), 547 to 563 (LCHF…FCKC), 567 to 587 (MSPL…LQVI), 616 to 636 (TLIV…ILQL), 651 to 671 (LSIL…HHVF), 687 to 707 (SLAN…FFLL), 715 to 735 (INVI…LSFL), 738 to 758 (PLGH…IQLK), 762 to 782 (PSVG…SHFF), 813 to 833 (IFMF…IPLF), 853 to 873 (FSFI…AGFF), and 887 to 907 (FMLS…QCFG).

The protein belongs to the PIGG/PIGN/PIGO family. PIGO subfamily. Glycosylated.

Its subcellular location is the endoplasmic reticulum membrane. It functions in the pathway glycolipid biosynthesis; glycosylphosphatidylinositol-anchor biosynthesis. In terms of biological role, involved in glycosylphosphatidylinositol-anchor biosynthesis. Transfers ethanolamine phosphate to the GPI third mannose which links the GPI-anchor to the C-terminus of the proteins by an amide bond. Involved in cell wall biosynthesis. In Schizosaccharomyces pombe (strain 972 / ATCC 24843) (Fission yeast), this protein is GPI ethanolamine phosphate transferase 3 (gpi13).